We begin with the raw amino-acid sequence, 222 residues long: ATP-dependent Clp protease proteolytic subunit (222 aa).

S125 serves as the catalytic Nucleophile. H150 is an active-site residue.

Belongs to the peptidase S14 family. Fourteen ClpP subunits assemble into 2 heptameric rings which stack back to back to give a disk-like structure with a central cavity, resembling the structure of eukaryotic proteasomes.

The protein localises to the cytoplasm. The catalysed reaction is Hydrolysis of proteins to small peptides in the presence of ATP and magnesium. alpha-casein is the usual test substrate. In the absence of ATP, only oligopeptides shorter than five residues are hydrolyzed (such as succinyl-Leu-Tyr-|-NHMec, and Leu-Tyr-Leu-|-Tyr-Trp, in which cleavage of the -Tyr-|-Leu- and -Tyr-|-Trp bonds also occurs).. Functionally, cleaves peptides in various proteins in a process that requires ATP hydrolysis. Has a chymotrypsin-like activity. Plays a major role in the degradation of misfolded proteins. The chain is ATP-dependent Clp protease proteolytic subunit from Porphyromonas gingivalis (strain ATCC BAA-308 / W83).